The chain runs to 163 residues: D-aminoacyl-tRNA deacylase (163 aa).

The Gly-cisPro motif, important for rejection of L-amino acids signature appears at 141 to 142; the sequence is GP.

Belongs to the DTD family. Homodimer.

It localises to the cytoplasm. The enzyme catalyses glycyl-tRNA(Ala) + H2O = tRNA(Ala) + glycine + H(+). It catalyses the reaction a D-aminoacyl-tRNA + H2O = a tRNA + a D-alpha-amino acid + H(+). In terms of biological role, an aminoacyl-tRNA editing enzyme that deacylates mischarged D-aminoacyl-tRNAs. Also deacylates mischarged glycyl-tRNA(Ala), protecting cells against glycine mischarging by AlaRS. Acts via tRNA-based rather than protein-based catalysis; rejects L-amino acids rather than detecting D-amino acids in the active site. By recycling D-aminoacyl-tRNA to D-amino acids and free tRNA molecules, this enzyme counteracts the toxicity associated with the formation of D-aminoacyl-tRNA entities in vivo and helps enforce protein L-homochirality. In Neisseria meningitidis serogroup A / serotype 4A (strain DSM 15465 / Z2491), this protein is D-aminoacyl-tRNA deacylase.